A 117-amino-acid polypeptide reads, in one-letter code: Iron-sulfur cluster insertion protein ErpA (117 aa).

Residues C45, C109, and C111 each contribute to the iron-sulfur cluster site.

The protein belongs to the HesB/IscA family. As to quaternary structure, homodimer. Requires iron-sulfur cluster as cofactor.

Required for insertion of 4Fe-4S clusters for at least IspG. The polypeptide is Iron-sulfur cluster insertion protein ErpA (Hahella chejuensis (strain KCTC 2396)).